A 432-amino-acid polypeptide reads, in one-letter code: Adenylosuccinate synthetase (432 aa).

Residues 11–17 (GDEGKGK) and 39–41 (GHT) contribute to the GTP site. Residue Asp-12 is the Proton acceptor of the active site. Positions 12 and 39 each coordinate Mg(2+). IMP contacts are provided by residues 12–15 (DEGK), 37–40 (NAGH), Thr-134, Arg-148, Asn-230, Thr-245, and Arg-309. His-40 functions as the Proton donor in the catalytic mechanism. 305–311 (VTTGRKR) provides a ligand contact to substrate. GTP contacts are provided by residues Arg-311, 337–339 (KLD), and 419–421 (GTG).

This sequence belongs to the adenylosuccinate synthetase family. In terms of assembly, homodimer. Mg(2+) serves as cofactor.

It localises to the cytoplasm. It carries out the reaction IMP + L-aspartate + GTP = N(6)-(1,2-dicarboxyethyl)-AMP + GDP + phosphate + 2 H(+). It functions in the pathway purine metabolism; AMP biosynthesis via de novo pathway; AMP from IMP: step 1/2. Its function is as follows. Plays an important role in the de novo pathway and in the salvage pathway of purine nucleotide biosynthesis. Catalyzes the first committed step in the biosynthesis of AMP from IMP. In Vanderwaltozyma polyspora (strain ATCC 22028 / DSM 70294 / BCRC 21397 / CBS 2163 / NBRC 10782 / NRRL Y-8283 / UCD 57-17) (Kluyveromyces polysporus), this protein is Adenylosuccinate synthetase.